We begin with the raw amino-acid sequence, 778 residues long: Endonuclease MutS2 (778 aa).

Residue 328–335 (GPNTGGKT) participates in ATP binding. The Smr domain maps to 702-777 (LDLRGKRYEE…GSGATIVTFK (76 aa)).

The protein belongs to the DNA mismatch repair MutS family. MutS2 subfamily. In terms of assembly, homodimer. Binds to stalled ribosomes, contacting rRNA.

Functionally, endonuclease that is involved in the suppression of homologous recombination and thus may have a key role in the control of bacterial genetic diversity. Its function is as follows. Acts as a ribosome collision sensor, splitting the ribosome into its 2 subunits. Detects stalled/collided 70S ribosomes which it binds and splits by an ATP-hydrolysis driven conformational change. Acts upstream of the ribosome quality control system (RQC), a ribosome-associated complex that mediates the extraction of incompletely synthesized nascent chains from stalled ribosomes and their subsequent degradation. Probably generates substrates for RQC. The protein is Endonuclease MutS2 of Streptococcus pneumoniae serotype 19F (strain G54).